We begin with the raw amino-acid sequence, 577 residues long: Arginine--tRNA ligase (577 aa).

The short motif at 122–132 (PNVAKEMHVGH) is the 'HIGH' region element.

It belongs to the class-I aminoacyl-tRNA synthetase family. As to quaternary structure, monomer.

It localises to the cytoplasm. It catalyses the reaction tRNA(Arg) + L-arginine + ATP = L-arginyl-tRNA(Arg) + AMP + diphosphate. The protein is Arginine--tRNA ligase of Aliivibrio salmonicida (strain LFI1238) (Vibrio salmonicida (strain LFI1238)).